Here is a 379-residue protein sequence, read N- to C-terminus: Anomalous homeobox protein (379 aa).

The homeobox DNA-binding region spans 135–196 (PEGLKSRNFP…NYRRRQRALP (62 aa)). A disordered region spans residues 195 to 283 (LPQHMKPAQQ…SKPLDVSGHP (89 aa)). The span at 237–246 (QWSEEREEKG) shows a compositional bias: basic and acidic residues.

It is found in the nucleus. The protein is Anomalous homeobox protein (ANHX) of Homo sapiens (Human).